The chain runs to 292 residues: Short chain dehydrogenase/reductase CPUR_05418 (292 aa).

2 residues coordinate NADP(+): Ile44 and Arg156. Active-site proton donor residues include Ser172 and Tyr186. 4 residues coordinate NADP(+): Tyr186, Lys190, Ile221, and Thr223. Residue Lys190 is the Lowers pKa of active site Tyr of the active site.

This sequence belongs to the short-chain dehydrogenases/reductases (SDR) family.

Its pathway is secondary metabolite biosynthesis. Short chain dehydrogenase/reductase; part of the ergochrome gene cluster responsible for the typical purple-black color of the ergot sclerotia. The ergochrome gene cluster produces several ergot pigments including the yellow ergochrome secalonic acid and its derivatives, as well as the red anthraquinones endocrocin and clavorubin. The pathway begins with the synthesis of atrochrysone thioester by the polyketide synthase (PKS) CPUR_05437. The atrochrysone carboxyl ACP thioesterase CPUR_05436 then breaks the thioester bond and releases the atrochrysone carboxylic acid from CPUR_05437. The atrochrysone carboxylic acid is then converted to atrochrysone which is further transformed into emodin anthrone. The next step is performed by the anthrone oxygenase CPUR_05434 that catalyzes the oxidation of emodinanthrone to emodin. Emodin is further modified to yield monodictyphenone via several steps involving CPUR_05427, CPUR_05428, CPUR_05429 and CPUR_05430. The short chain dehydrogenase/reductase CPUR_05418 then catalyzes the C-5 ketoreduction to give the xanthone skeleton of the monomeric units. Ergochromes formation requires further dimerization steps of different xanthone units, probably catalyzed by the cytochrome P450 monooxygenase CPUR_05419. CPUR_05425, CPUR_05426 and CPUR_05431 are unique to Claviceps, thus it is likely that they are involved in further modification of xanthone units or in their dimerization. The yellow ergochromes and the red anthraquinone pigments endocrocin and clavorubin are products from the same PKS derived precursors and the latter are likely shunt products in the pathway of xanthone biosynthesis. It is proposed that atrochrysone carboxylic acid released from the PKS CPUR_05437 can also be converted to endocrocin anthrone which is further oxidized into endocrocin by CPUR_05435. Endocrocin could be then modified to clavorubin, possibly by CPUR_05423 and CPUR_05431. Clavorubin is the principal anthraquinone metabolite produced by the cluster with a much higher yield compared to endocrocin. This is Short chain dehydrogenase/reductase CPUR_05418 from Claviceps purpurea (strain 20.1) (Ergot fungus).